A 509-amino-acid polypeptide reads, in one-letter code: MQHNVLILDFGSQYTQLIARRVRELNIFCEIFPFDKIPTDLSIYKAVILGGSPFSVRSEDALHPDLSEIRGKLPLLAVCYGAQYLAHFSGGEVAASNTREYGRANLTYIKENETFFENVNLNSQVWMSHSDSIKKLPTNGIKLASTQDVENAAYKIEGETTYAIQYHPEVFHSTDGKQMLENFLVKIAQVPQNFTPNAFVSDMVAELKEKLQDDKVVLGLSGGVDSTVAAVLLHQAIGKNLYCIFVNNGLLRKNEFQSVLDQYKGMGLNVKGVDAGDRFLSELAGISDPETKRKTIGRVFIEVFDDESKIIENVKWLAQGTIYPDVIESVSVKGPSATIKSHHNVGGLPDYMKLQIVEPLRMLFKDEVRRVGATLGIDAELLGRHPFPGPGLSIRILGDITPEKVQILQDVDAVFINGLKEHGLYDKVWQAGAILLPVNSVGVMGDERTYEKVVALRAVESTDGMTADWVHLPYEFLMKISNDIINKVKGVNRVVYDISSKPPATIEWE.

Residues 4–193 enclose the Glutamine amidotransferase type-1 domain; the sequence is NVLILDFGSQ…LVKIAQVPQN (190 aa). C79 (nucleophile) is an active-site residue. Catalysis depends on residues H167 and E169. Positions 194–384 constitute a GMPS ATP-PPase domain; the sequence is FTPNAFVSDM…LGIDAELLGR (191 aa). 221 to 227 lines the ATP pocket; the sequence is SGGVDST.

Homodimer.

The catalysed reaction is XMP + L-glutamine + ATP + H2O = GMP + L-glutamate + AMP + diphosphate + 2 H(+). It functions in the pathway purine metabolism; GMP biosynthesis; GMP from XMP (L-Gln route): step 1/1. Catalyzes the synthesis of GMP from XMP. The polypeptide is GMP synthase [glutamine-hydrolyzing] (Flavobacterium psychrophilum (strain ATCC 49511 / DSM 21280 / CIP 103535 / JIP02/86)).